Here is a 461-residue protein sequence, read N- to C-terminus: MLKIFNTLTRQKEEFKPIHAGEVGMYVCGITVYDLCHIGHGRTFVAFDVVARYLRFLGYKLKYVRNITDIDDKIIKRANENGESFVALVDRMIAEMHQDFDALNILRPDSEPRATHHIQEIIELTRTLIEKGHAYVADNGDVMFDVPTDPTYGQLSRQDLEQLQAGARVDVVDVKRNPMDFVLWKMSKEGEPSWPSPWGEGRPGWHIECSAMNCKQLGNHFDIHGGGSDLMFPHHENEIAQSTCAHDGEYVNYWMHSGMVMVDREKMSKSLGNFFTVRDVLKYYDAETVRYFLMSGHYRSQLNYSEENLKQARASLERLYTALRGTDKSAAPAGGEAFEARFVEAMNDDFNTPEAYSVLFDMAREVNRLKGEDMTAANAMASHLRKISGVLGLLEQEPDVFLQSGAQADDGEVAEIEALIQQRLDARKAKDWAAADAARDRLTEMGIILEDGPQGTTWRRK.

Residue cysteine 28 participates in Zn(2+) binding. Residues 30–40 (ITVYDLCHIGH) carry the 'HIGH' region motif. Zn(2+) is bound by residues cysteine 209, histidine 234, and glutamate 238. Residues 266–270 (KMSKS) carry the 'KMSKS' region motif. Lysine 269 serves as a coordination point for ATP.

This sequence belongs to the class-I aminoacyl-tRNA synthetase family. In terms of assembly, monomer. Zn(2+) is required as a cofactor.

It is found in the cytoplasm. The catalysed reaction is tRNA(Cys) + L-cysteine + ATP = L-cysteinyl-tRNA(Cys) + AMP + diphosphate. This Salmonella dublin (strain CT_02021853) protein is Cysteine--tRNA ligase.